The chain runs to 345 residues: Pyruvate dehydrogenase E1 component subunit alpha (345 aa).

Heterodimer of an alpha and a beta chain. It depends on thiamine diphosphate as a cofactor.

It catalyses the reaction N(6)-[(R)-lipoyl]-L-lysyl-[protein] + pyruvate + H(+) = N(6)-[(R)-S(8)-acetyldihydrolipoyl]-L-lysyl-[protein] + CO2. The pyruvate dehydrogenase complex catalyzes the overall conversion of pyruvate to acetyl-CoA and CO(2). It contains multiple copies of three enzymatic components: pyruvate dehydrogenase (E1), dihydrolipoamide acetyltransferase (E2) and lipoamide dehydrogenase (E3). This Acholeplasma laidlawii protein is Pyruvate dehydrogenase E1 component subunit alpha (pdhA).